Here is a 423-residue protein sequence, read N- to C-terminus: Putative competence-damage inducible protein (423 aa).

This sequence belongs to the CinA family.

The chain is Putative competence-damage inducible protein from Streptococcus equi subsp. zooepidemicus (strain MGCS10565).